The following is a 64-amino-acid chain: Translational regulator CsrA 1 (64 aa).

Belongs to the CsrA/RsmA family. Homodimer; the beta-strands of each monomer intercalate to form a hydrophobic core, while the alpha-helices form wings that extend away from the core.

The protein localises to the cytoplasm. A key translational regulator that binds mRNA to regulate translation initiation and/or mRNA stability. Mediates global changes in gene expression, shifting from rapid growth to stress survival by linking envelope stress, the stringent response and the catabolite repression systems. Usually binds in the 5'-UTR; binding at or near the Shine-Dalgarno sequence prevents ribosome-binding, repressing translation, binding elsewhere in the 5'-UTR can activate translation and/or stabilize the mRNA. Its function is antagonized by small RNA(s). The protein is Translational regulator CsrA 1 of Pseudomonas syringae pv. tomato (strain ATCC BAA-871 / DC3000).